We begin with the raw amino-acid sequence, 295 residues long: Bifunctional protein FolD (295 aa).

Residues 166-168, Ser-195, and Ile-236 each bind NADP(+); that span reads GRS.

The protein belongs to the tetrahydrofolate dehydrogenase/cyclohydrolase family. Homodimer.

It catalyses the reaction (6R)-5,10-methylene-5,6,7,8-tetrahydrofolate + NADP(+) = (6R)-5,10-methenyltetrahydrofolate + NADPH. The enzyme catalyses (6R)-5,10-methenyltetrahydrofolate + H2O = (6R)-10-formyltetrahydrofolate + H(+). It participates in one-carbon metabolism; tetrahydrofolate interconversion. In terms of biological role, catalyzes the oxidation of 5,10-methylenetetrahydrofolate to 5,10-methenyltetrahydrofolate and then the hydrolysis of 5,10-methenyltetrahydrofolate to 10-formyltetrahydrofolate. The sequence is that of Bifunctional protein FolD from Chlorobium luteolum (strain DSM 273 / BCRC 81028 / 2530) (Pelodictyon luteolum).